The primary structure comprises 301 residues: GTPase Era (301 aa).

The region spanning 7 to 175 (YCGFIAIVGR…AAIVRKHLPE (169 aa)) is the Era-type G domain. The segment at 15 to 22 (GRPNVGKS) is G1. 15 to 22 (GRPNVGKS) contacts GTP. The interval 41–45 (QTTRH) is G2. The interval 62–65 (DTPG) is G3. GTP is bound by residues 62 to 66 (DTPGL) and 124 to 127 (NKVD). The tract at residues 124 to 127 (NKVD) is G4. The segment at 154-156 (ISA) is G5. Residues 206–283 (LGAELPYSVT…HLELWVKVKS (78 aa)) enclose the KH type-2 domain.

This sequence belongs to the TRAFAC class TrmE-Era-EngA-EngB-Septin-like GTPase superfamily. Era GTPase family. Monomer.

Its subcellular location is the cytoplasm. It is found in the cell inner membrane. In terms of biological role, an essential GTPase that binds both GDP and GTP, with rapid nucleotide exchange. Plays a role in 16S rRNA processing and 30S ribosomal subunit biogenesis and possibly also in cell cycle regulation and energy metabolism. The sequence is that of GTPase Era from Escherichia coli (strain K12 / DH10B).